The sequence spans 1032 residues: Toll-like receptor 9 (1032 aa).

Positions 1–25 (MGFCRSALHPLSLLVQAIMLAMTLA) are cleaved as a signal peptide. Residues 26–818 (LGTLPAFLPC…CLDEALSWDC (793 aa)) are Extracellular-facing. A disulfide bond links Cys35 and Cys45. 47–51 (WLFLK) lines the DNA pocket. LRR repeat units follow at residues 62–85 (RGNV…DFAH), 87–110 (PSLR…HFPC), 122–147 (VPTL…SLIS), 150–166 (LSHT…LAGL), 167–190 (HALR…ALEV), 198–221 (LGNL…LPSS), 223–242 (EYLL…DLAN), 243–268 (LTAL…CMEC), 283–306 (LSRL…WFRG), 308–332 (GNLR…AFQG), 333–356 (LTQL…HLSL), 363–386 (LVAL…TLRP), 390–413 (LPML…IFRA), and 415–440 (PGLR…MGEA). An N-linked (GlcNAc...) asparagine glycan is attached at Asn64. DNA-binding positions include 72–77 (SNRIHH) and 95–109 (KWNC…MHFP). A disulfide bridge connects residues Cys98 and Cys110. The N-linked (GlcNAc...) asparagine glycan is linked to Asn129. Tyr132 is a DNA binding site. Cys178 and Cys184 are disulfide-bonded. Residue 179 to 181 (YYK) participates in DNA binding. The N-linked (GlcNAc...) asparagine glycan is linked to Asn200. Tyr208 provides a ligand contact to DNA. 2 N-linked (GlcNAc...) asparagine glycosylation sites follow: Asn210 and Asn242. Intrachain disulfides connect Cys255–Cys268 and Cys258–Cys265. Residues Cys258 and Cys265 are each lipidated (S-palmitoyl cysteine). Asn300 is a glycosylation site (N-linked (GlcNAc...) asparagine). N-linked (GlcNAc...) asparagine glycosylation occurs at Asn340. Asn469, Asn474, and Asn513 each carry an N-linked (GlcNAc...) asparagine glycan. LRR repeat units lie at residues 470–494 (CSTL…MFAQ), 496–519 (SHLQ…QFLP), 520–543 (LTGL…SFTE), 545–572 (PRLE…SFVA), 574–598 (LRTL…LCST), 600–622 (LRAL…LYLH), 627–650 (LSGL…TLRN), 652–675 (PKSL…SLHF), 676–699 (LPKL…SLPA), 701–723 (TRLR…FFSK), 724–747 (AKEL…WFGP), and 749–772 (ASAL…AFMD). Residues Cys470 and Cys500 are joined by a disulfide bond. N-linked (GlcNAc...) asparagine glycosylation occurs at Asn567. An N-linked (GlcNAc...) asparagine glycan is attached at Asn694. N-linked (GlcNAc...) asparagine glycosylation is present at Asn731. Cystine bridges form between Cys764–Cys790 and Cys766–Cys809. A helical transmembrane segment spans residues 819 to 839 (FALSLLAVALGLGVPMLHHLC). Residues 840–1032 (GWDLWYCFHL…RNFCQGPTAE (193 aa)) are Cytoplasmic-facing. Residues 868 to 1013 (LPYDAFVVFD…SFWAQLGMAL (146 aa)) form the TIR domain.

Belongs to the Toll-like receptor family. As to quaternary structure, monomer and homodimer. Exists as a monomer in the absence of unmethylated cytidine-phosphate-guanosine (CpG) ligand. Proteolytic processing of an insertion loop (Z-loop) is required for homodimerization upon binding to the unmethylated CpG ligand leading to its activation. Interacts with MYD88 via their respective TIR domains. Interacts with BTK. Interacts (via transmembrane domain) with UNC93B1. Interacts with CD300LH; the interaction may promote full activation of TLR9-triggered innate responses. Interacts with CNPY3 and HSP90B1; this interaction is required for proper folding in the endoplasmic reticulum. Interacts with SMPDL3B. Interacts with CD82; this interaction is essential for TLR9-dependent myddosome formation in response to CpG stimulation. Post-translationally, activated by proteolytic cleavage of the flexible loop between repeats LRR14 and LRR15 within the ectodomain. Cleavage requires UNC93B1. Proteolytically processed by first removing the majority of the ectodomain by either asparagine endopeptidase (AEP) or a cathepsin followed by a trimming event that is solely cathepsin mediated and required for optimal receptor signaling. In terms of processing, palmitoylated by ZDHHC3 in the Golgi regulates TLR9 trafficking from the Golgi to endosomes. Depalmitoylation by PPT1 controls the release of TLR9 from UNC93B1 in endosomes. As to expression, highly expressed in spleen, lymph node, tonsil and peripheral blood leukocytes, especially in plasmacytoid pre-dendritic cells. Levels are much lower in monocytes and CD11c+ immature dendritic cells. Also detected in lung and liver.

It localises to the endoplasmic reticulum membrane. Its subcellular location is the early endosome membrane. The protein resides in the lysosome. It is found in the cytoplasmic vesicle. The protein localises to the phagosome. It localises to the golgi apparatus membrane. Key component of innate and adaptive immunity. TLRs (Toll-like receptors) control host immune response against pathogens through recognition of molecular patterns specific to microorganisms. TLR9 is a nucleotide-sensing TLR which is activated by unmethylated cytidine-phosphate-guanosine (CpG) dinucleotides. Acts via MYD88 and TRAF6, leading to NF-kappa-B activation, cytokine secretion and the inflammatory response. Controls lymphocyte response to Helicobacter infection. Upon CpG stimulation, induces B-cell proliferation, activation, survival and antibody production. The polypeptide is Toll-like receptor 9 (TLR9) (Homo sapiens (Human)).